A 581-amino-acid chain; its full sequence is Pentatricopeptide repeat-containing protein At3g56550 (581 aa).

9 PPR repeats span residues 70 to 104, 106 to 140, 141 to 171, 172 to 206, 207 to 241, 242 to 272, 273 to 307, 308 to 338, and 344 to 378; these read STSD…SVSR, DLFT…GFLD, DAIV…MPVR, DLVS…GVCG, DSYT…RCES, CVFV…MRKR, DVLT…GVRP, NAIT…MSSQ, and NVKH…EDPV. The tract at residues 379 to 454 is type E motif; the sequence is LWRTLLGSCK…VPGWSWIEIG (76 aa). The segment at 455 to 485 is type E(+) motif; it reads DQVHKFVVDDKMHPESAVIYSELGEVINRAI. The segment at 486-581 is type DYW motif; that stretch reads LAGYKPEDSN…DGICSCNDYW (96 aa).

This sequence belongs to the PPR family. PCMP-H subfamily.

This chain is Pentatricopeptide repeat-containing protein At3g56550 (PCMP-H80), found in Arabidopsis thaliana (Mouse-ear cress).